Consider the following 239-residue polypeptide: Superoxide dismutase [Mn] 3 (239 aa).

The span at 1–19 shows a compositional bias: polar residues; that stretch reads ASTQQTPAQSPTASPTVST. Positions 1–20 are disordered; it reads ASTQQTPAQSPTASPTVSTP. The first 30 residues, 1–30, serve as a signal peptide directing secretion; that stretch reads ASTQQTPAQSPTASPTVSTPVAYVDRPLTA. Residues H57, H112, D195, and H199 each coordinate Mn(2+).

This sequence belongs to the iron/manganese superoxide dismutase family. As to quaternary structure, homodimer. It depends on Mn(2+) as a cofactor.

It catalyses the reaction 2 superoxide + 2 H(+) = H2O2 + O2. Destroys superoxide anion radicals which are normally produced within the cells and which are toxic to biological systems. The protein is Superoxide dismutase [Mn] 3 (sodA3) of Leptolyngbya boryana (Plectonema boryanum).